The following is a 479-amino-acid chain: Ribosomal RNA small subunit methyltransferase F (479 aa).

S-adenosyl-L-methionine contacts are provided by residues 125–131 (AAAPGSK), glutamate 149, aspartate 176, and aspartate 194. The active-site Nucleophile is the cysteine 247.

This sequence belongs to the class I-like SAM-binding methyltransferase superfamily. RsmB/NOP family.

The protein localises to the cytoplasm. It carries out the reaction cytidine(1407) in 16S rRNA + S-adenosyl-L-methionine = 5-methylcytidine(1407) in 16S rRNA + S-adenosyl-L-homocysteine + H(+). Functionally, specifically methylates the cytosine at position 1407 (m5C1407) of 16S rRNA. This Escherichia fergusonii (strain ATCC 35469 / DSM 13698 / CCUG 18766 / IAM 14443 / JCM 21226 / LMG 7866 / NBRC 102419 / NCTC 12128 / CDC 0568-73) protein is Ribosomal RNA small subunit methyltransferase F.